Reading from the N-terminus, the 263-residue chain is Protein MARD1 (263 aa).

Residues 219–263 form an FLZ-type zinc finger; it reads SFLSRCFTCKKNLDQKQDIYIYRGEKGFCSSECRYQEMLLDQMET.

Belongs to the FLZ family. Interacts with KIN10 and KIN11 via its FLZ-type zinc finger domain. Interacts with KINB1 and KINB2 via its N-terminal part. Interacts with TZF4, TZF5 and TZF6. Interacts with MPK3 and MPK6.

The protein localises to the cytoplasm. The protein resides in the stress granule. Its subcellular location is the P-body. Its function is as follows. May act as an adapter to facilitate the interaction of SnRK1 complex with effector proteins, conferring tissue- and stimulus-type specific differences in the SnRK1 regulation pathway. Involved in seed dormancy control. In Arabidopsis thaliana (Mouse-ear cress), this protein is Protein MARD1.